A 153-amino-acid polypeptide reads, in one-letter code: Deoxyuridine 5'-triphosphate nucleotidohydrolase (153 aa).

DUMP-binding residues include Ser-75, Gly-88, Asp-91, Tyr-94, Lys-99, Arg-143, Phe-148, and Gly-149.

The protein belongs to the dUTPase family. Homotrimer. Requires Mg(2+) as cofactor.

The enzyme catalyses dUTP + H2O = dUMP + diphosphate + H(+). It participates in pyrimidine metabolism; dUMP biosynthesis; dUMP from dCTP (dUTP route): step 2/2. Functionally, involved in nucleotide metabolism via production of dUMP, the immediate precursor of thymidine nucleotides, and decreases the intracellular concentration of dUTP so that uracil cannot be incorporated into DNA. The chain is Deoxyuridine 5'-triphosphate nucleotidohydrolase (DUT1) from Eremothecium gossypii (strain ATCC 10895 / CBS 109.51 / FGSC 9923 / NRRL Y-1056) (Yeast).